The sequence spans 563 residues: Efflux pump FUS6 (563 aa).

The disordered stretch occupies residues 1-30; it reads MPQPDKMAAVNNAMPQPAPEKSLSSDPQPE. 5 consecutive transmembrane segments (helical) span residues 39–59, 75–95, 105–125, 138–158, and 167–187; these read WLIF…TSII, LYVW…PIFA, SLTL…GGAH, GIGG…MVSI, and IIGG…GAFA. Residue Asn-189 is glycosylated (N-linked (GlcNAc...) asparagine). Transmembrane regions (helical) follow at residues 194-214, 233-253, and 261-281; these read WIFY…GLFL, WGGS…LSWG, and GWQT…FFAY. N-linked (GlcNAc...) asparagine glycosylation occurs at Asn-299. A run of 6 helical transmembrane segments spans residues 305 to 325, 340 to 360, 368 to 388, 401 to 421, 433 to 453, and 509 to 529; these read LLVI…FLPV, VMLF…GITI, VWHF…TLLD, ILFG…ILAS, AWTF…AAVF, and KVVW…CFFV. N-linked (GlcNAc...) asparagine glycosylation is present at Asn-553.

It belongs to the major facilitator superfamily. TCR/Tet family.

It localises to the membrane. Its function is as follows. Efflux pump; part of the gene cluster that mediates the biosynthesis of the mycotoxin fusarin C. Within the cluster, FUS1, FUS2, FUS8 and FUS9 are sufficient for fusarin production. The other FUS cluster members are not essential for fusarin C biosynthesis. This chain is Efflux pump FUS6, found in Gibberella moniliformis (strain M3125 / FGSC 7600) (Maize ear and stalk rot fungus).